Here is a 193-residue protein sequence, read N- to C-terminus: Probable thymidylate kinase (193 aa).

7–14 (GIDGAGKT) contacts ATP.

The protein belongs to the thymidylate kinase family.

It carries out the reaction dTMP + ATP = dTDP + ADP. In Thermoplasma acidophilum (strain ATCC 25905 / DSM 1728 / JCM 9062 / NBRC 15155 / AMRC-C165), this protein is Probable thymidylate kinase (tmk).